A 230-amino-acid polypeptide reads, in one-letter code: Large ribosomal subunit protein uL4 (230 aa).

Residues 51–105 are disordered; it reads RAAARQGTHSTKTRGDVSGGGRKPYRQKGTGRARQGSMRAPQFTGGGIVHGPKLR.

The protein belongs to the universal ribosomal protein uL4 family. Part of the 50S ribosomal subunit.

Its function is as follows. One of the primary rRNA binding proteins, this protein initially binds near the 5'-end of the 23S rRNA. It is important during the early stages of 50S assembly. It makes multiple contacts with different domains of the 23S rRNA in the assembled 50S subunit and ribosome. In terms of biological role, forms part of the polypeptide exit tunnel. In Mycobacterium leprae (strain Br4923), this protein is Large ribosomal subunit protein uL4.